Reading from the N-terminus, the 155-residue chain is UPF0461 protein C5orf24 homolog (155 aa).

Polar residues predominate over residues 1–10 (MMHPVASSNP). Residues 1–20 (MMHPVASSNPAFCGPGKPSC) are disordered. S37 bears the Phosphoserine mark. Residues 40 to 155 (SKYSHTVNHK…QQAFRCSSDA (116 aa)) are disordered. Over residues 57–70 (DPLNETHLQTTSGR) the composition is skewed to polar residues. K75 is covalently cross-linked (Glycyl lysine isopeptide (Lys-Gly) (interchain with G-Cter in SUMO2)). Residues 80-92 (KKKNLNRSGKRGR) show a composition bias toward basic residues. Residues 94 to 107 (SGTTKSAGYRTSTG) show a composition bias toward polar residues. The residue at position 121 (S121) is a Phosphoserine.

It belongs to the UPF0461 family.

The polypeptide is UPF0461 protein C5orf24 homolog (Pongo abelii (Sumatran orangutan)).